A 175-amino-acid polypeptide reads, in one-letter code: Bcl-2-related protein A1 (175 aa).

This sequence belongs to the Bcl-2 family. As to quaternary structure, interacts directly with BCL2L11/BIM, BAK1, BID, BMF and BBC3. Interacts directly with PMAIP1. Interacts with BOP. Interacts with ING4. Interacts with UBQLN4.

It localises to the cytoplasm. Its function is as follows. Retards apoptosis induced by IL-3 deprivation. May function in the response of hemopoietic cells to external signals and in maintaining endothelial survival during infection. Can inhibit apoptosis induced by serum starvation in the mammary epithelial cell line HC11. In Bos taurus (Bovine), this protein is Bcl-2-related protein A1 (BCL2A1).